The chain runs to 247 residues: Ribonuclease 3 (247 aa).

An RNase III domain is found at leucine 5–glycine 147. Glutamate 40 contributes to the Mg(2+) binding site. The active site involves aspartate 44. The disordered stretch occupies residues glutamine 104 to glycine 124. Residues aspartate 133 and glutamate 136 each coordinate Mg(2+). Glutamate 136 is a catalytic residue. The 71-residue stretch at aspartate 174–alanine 244 folds into the DRBM domain.

The protein belongs to the ribonuclease III family. In terms of assembly, homodimer. Mg(2+) serves as cofactor.

The protein localises to the cytoplasm. The enzyme catalyses Endonucleolytic cleavage to 5'-phosphomonoester.. Functionally, digests double-stranded RNA. Involved in the processing of primary rRNA transcript to yield the immediate precursors to the large and small rRNAs (23S and 16S). Processes some mRNAs, and tRNAs when they are encoded in the rRNA operon. Processes pre-crRNA and tracrRNA of type II CRISPR loci if present in the organism. This chain is Ribonuclease 3, found in Verminephrobacter eiseniae (strain EF01-2).